A 597-amino-acid chain; its full sequence is UvrABC system protein C (597 aa).

The GIY-YIG domain maps to 15–93 (DNPGVYQYYD…IKTLQPRYNV (79 aa)). The UVR domain maps to 207–242 (KESLKDFKKLMNNYAQNLQFEEAQKIKEKIEVLENY).

Belongs to the UvrC family. Interacts with UvrB in an incision complex.

It localises to the cytoplasm. The UvrABC repair system catalyzes the recognition and processing of DNA lesions. UvrC both incises the 5' and 3' sides of the lesion. The N-terminal half is responsible for the 3' incision and the C-terminal half is responsible for the 5' incision. The chain is UvrABC system protein C from Flavobacterium johnsoniae (strain ATCC 17061 / DSM 2064 / JCM 8514 / BCRC 14874 / CCUG 350202 / NBRC 14942 / NCIMB 11054 / UW101) (Cytophaga johnsonae).